A 179-amino-acid chain; its full sequence is MSLAIIPFITIGWLRCTRKSRDTMSSSPEPQAPMHVTQRQISVFSDEFRQRRRQQMLRFFGATAFTLLSARLAFRGTINRKYVPNMFQLNHRVPLASSQGEALHAFAYGSGLATGGFAMLILGTCWLADVSTVPEFSLRIKALLGESDTQSGRLESAHQDKETRELAAMLDSLLQEKKD.

The next 2 membrane-spanning stretches (helical) occupy residues 56 to 78 (MLRF…RGTI) and 105 to 127 (AFAY…TCWL).

The protein belongs to the AIM11 family.

It localises to the membrane. This is Altered inheritance of mitochondria protein 11 (AIM11) from Eremothecium gossypii (strain ATCC 10895 / CBS 109.51 / FGSC 9923 / NRRL Y-1056) (Yeast).